The primary structure comprises 391 residues: 8-amino-7-oxononanoate synthase (391 aa).

Residue 108–109 (GF) participates in pyridoxal 5'-phosphate binding. His-133 is a binding site for substrate. Residues Ser-180, His-208, and Thr-236 each coordinate pyridoxal 5'-phosphate. An N6-(pyridoxal phosphate)lysine modification is found at Lys-239. Residue Thr-353 coordinates substrate.

Belongs to the class-II pyridoxal-phosphate-dependent aminotransferase family. BioF subfamily. In terms of assembly, homodimer. The cofactor is pyridoxal 5'-phosphate.

It catalyses the reaction 6-carboxyhexanoyl-[ACP] + L-alanine + H(+) = (8S)-8-amino-7-oxononanoate + holo-[ACP] + CO2. It functions in the pathway cofactor biosynthesis; biotin biosynthesis. Catalyzes the decarboxylative condensation of pimeloyl-[acyl-carrier protein] and L-alanine to produce 8-amino-7-oxononanoate (AON), [acyl-carrier protein], and carbon dioxide. This Thermosipho melanesiensis (strain DSM 12029 / CIP 104789 / BI429) protein is 8-amino-7-oxononanoate synthase.